Reading from the N-terminus, the 211-residue chain is Potassium-transporting ATPase KdpC subunit (211 aa).

A helical transmembrane segment spans residues 13 to 35 (VVTMVLTGLLYPLAVTGLAQLLF).

This sequence belongs to the KdpC family. As to quaternary structure, the system is composed of three essential subunits: KdpA, KdpB and KdpC.

The protein localises to the cell membrane. Functionally, part of the high-affinity ATP-driven potassium transport (or Kdp) system, which catalyzes the hydrolysis of ATP coupled with the electrogenic transport of potassium into the cytoplasm. This subunit acts as a catalytic chaperone that increases the ATP-binding affinity of the ATP-hydrolyzing subunit KdpB by the formation of a transient KdpB/KdpC/ATP ternary complex. This is Potassium-transporting ATPase KdpC subunit from Myxococcus xanthus.